A 183-amino-acid chain; its full sequence is UPF0114 protein HI_0507 (183 aa).

Transmembrane regions (helical) follow at residues 30 to 50 (LQVP…YKFI), 68 to 88 (IMLG…LVMV), and 150 to 170 (TMMW…ALAY).

The protein belongs to the UPF0114 family.

The protein resides in the cell membrane. In Haemophilus influenzae (strain ATCC 51907 / DSM 11121 / KW20 / Rd), this protein is UPF0114 protein HI_0507.